We begin with the raw amino-acid sequence, 837 residues long: Striatin-interacting protein 1 (837 aa).

Position 1 is an N-acetylmethionine (M1). 2 disordered regions span residues 1–67 (MEPA…ESPD) and 333–423 (AASP…KGLP). The span at 18-35 (PQPPPPPPPAAAQPPPGA) shows a compositional bias: pro residues. Positions 36–46 (PRAAAGLLPGG) are enriched in low complexity. The segment covering 47 to 60 (KAREFNRNQRKDSE) has biased composition (basic and acidic residues). Phosphoserine is present on residues S59, S335, and S339. Basic and acidic residues predominate over residues 356–377 (KALIKQDNLDAFNERDPYKADD). The span at 378–391 (SREEEEENDDDNSL) shows a compositional bias: acidic residues. Residue S788 is modified to Phosphoserine. Positions 796-837 (DNCLQSVLGQRVDLPEDFQMNYDLWLEREVFSKPISWEELLQ) are required for STRIPAK core complex formation.

This sequence belongs to the STRIP family. Part of the core of STRIPAK complexes composed of PP2A catalytic and scaffolding subunits, the striatins (PP2A regulatory subunits), the striatin-associated proteins MOB4, STRIP1 and STRIP2, PDCD10 and members of the STE20 kinases, such as STK24 and STK26. The STRIPAK complex can be extended by adapter proteins such as SLMAP:SIKE1, CTTNBP2 or CTTNBP2NL. Interacts with CDC42BPB. Interacts with CTTNBP2NL.

The protein resides in the cytoplasm. In terms of biological role, plays a role in the regulation of cell morphology and cytoskeletal organization. Required in the cortical actin filament dynamics and cell shape. Part of the striatin-interacting phosphatase and kinase (STRIPAK) complexes. STRIPAK complexes have critical roles in protein (de)phosphorylation and are regulators of multiple signaling pathways including Hippo, MAPK, nuclear receptor and cytoskeleton remodeling. Different types of STRIPAK complexes are involved in a variety of biological processes such as cell growth, differentiation, apoptosis, metabolism and immune regulation. The protein is Striatin-interacting protein 1 of Homo sapiens (Human).